The following is a 618-amino-acid chain: 1-deoxy-D-xylulose-5-phosphate synthase (618 aa).

Residues His-75 and 116–118 (GHS) contribute to the thiamine diphosphate site. Asp-147 lines the Mg(2+) pocket. Thiamine diphosphate contacts are provided by residues 148–149 (GA), Asn-176, Tyr-283, and Glu-364. Asn-176 lines the Mg(2+) pocket.

It belongs to the transketolase family. DXPS subfamily. In terms of assembly, homodimer. The cofactor is Mg(2+). It depends on thiamine diphosphate as a cofactor.

It carries out the reaction D-glyceraldehyde 3-phosphate + pyruvate + H(+) = 1-deoxy-D-xylulose 5-phosphate + CO2. It functions in the pathway metabolic intermediate biosynthesis; 1-deoxy-D-xylulose 5-phosphate biosynthesis; 1-deoxy-D-xylulose 5-phosphate from D-glyceraldehyde 3-phosphate and pyruvate: step 1/1. In terms of biological role, catalyzes the acyloin condensation reaction between C atoms 2 and 3 of pyruvate and glyceraldehyde 3-phosphate to yield 1-deoxy-D-xylulose-5-phosphate (DXP). This Thiobacillus denitrificans (strain ATCC 25259 / T1) protein is 1-deoxy-D-xylulose-5-phosphate synthase.